Consider the following 267-residue polypeptide: Undecaprenyl-diphosphatase (267 aa).

Transmembrane regions (helical) follow at residues 1–21 (MTLF…FLPV), 40–60 (GLAI…LYFW), 83–103 (AFLA…GLII), 111–131 (MMRS…VLYW), 144–164 (GWTL…LIPG), 189–209 (AMLM…ADVI), 219–239 (DGAL…ALMM), and 245–265 (VSFT…LVYA).

Belongs to the UppP family.

Its subcellular location is the cell inner membrane. It catalyses the reaction di-trans,octa-cis-undecaprenyl diphosphate + H2O = di-trans,octa-cis-undecaprenyl phosphate + phosphate + H(+). Its function is as follows. Catalyzes the dephosphorylation of undecaprenyl diphosphate (UPP). Confers resistance to bacitracin. The chain is Undecaprenyl-diphosphatase from Roseobacter denitrificans (strain ATCC 33942 / OCh 114) (Erythrobacter sp. (strain OCh 114)).